The primary structure comprises 416 residues: MRNQGFTKEDRMNQLPEDLILRILSFLPTELVIATSVLSKQWRSLWKLVPNLEFDSDDYESEHYTFSEIVCKSFLSLKAPVLKSLHLSFRKSVNPVDIGLWIGIAFARHLRELVLYVAPKQTFTFPSSLCICNTLETLKLILGIHVDIPCPVLLKSLRTLHLDSVSYKDEESIRNLLSSCPILENLVVYEYWYNVVNFDIEVPSLKRLEICDVLHKKEFRRYTINVPCLKYLRIEGLNKDFELCLNAPELVEAYFTKGSLIIADKFLGSLKSAKRLSLDILALKMHTRREEWWNLLTVMLDSSPKLQVLKLIDHTQDVSKDNVVSEKWNEPKYVPECLLSHLETFVWIRYDWEREEEKEVATYILRNARWLKKGTISTNPIESKDLEKLEERRKMLNELDSVVRASNSCNLVFEFE.

One can recognise an F-box domain in the interval 9–62 (EDRMNQLPEDLILRILSFLPTELVIATSVLSKQWRSLWKLVPNLEFDSDDYESE). Residues 327–378 (KWNEPKYVPECLLSHLETFVWIRYDWEREEEKEVATYILRNARWLKKGTIST) form the FBD domain.

The sequence is that of FBD-associated F-box protein At3g52670 from Arabidopsis thaliana (Mouse-ear cress).